The chain runs to 249 residues: UDP-2,3-diacylglucosamine hydrolase (249 aa).

Mn(2+)-binding residues include Asp7, His9, Asp40, Asn78, and His113. 78–79 (NR) contributes to the substrate binding site. Substrate-binding residues include Asp121, Ser159, Thr163, Lys166, and His194. Mn(2+) is bound by residues His194 and His196.

The protein belongs to the LpxH family. Mn(2+) serves as cofactor.

The protein localises to the cell inner membrane. The enzyme catalyses UDP-2-N,3-O-bis[(3R)-3-hydroxytetradecanoyl]-alpha-D-glucosamine + H2O = 2-N,3-O-bis[(3R)-3-hydroxytetradecanoyl]-alpha-D-glucosaminyl 1-phosphate + UMP + 2 H(+). Its pathway is glycolipid biosynthesis; lipid IV(A) biosynthesis; lipid IV(A) from (3R)-3-hydroxytetradecanoyl-[acyl-carrier-protein] and UDP-N-acetyl-alpha-D-glucosamine: step 4/6. In terms of biological role, hydrolyzes the pyrophosphate bond of UDP-2,3-diacylglucosamine to yield 2,3-diacylglucosamine 1-phosphate (lipid X) and UMP by catalyzing the attack of water at the alpha-P atom. Involved in the biosynthesis of lipid A, a phosphorylated glycolipid that anchors the lipopolysaccharide to the outer membrane of the cell. This chain is UDP-2,3-diacylglucosamine hydrolase, found in Pseudomonas fluorescens (strain SBW25).